The following is a 353-amino-acid chain: Photosystem II D2 protein (353 aa).

Position 2 is an N-acetylthreonine (Thr-2). Thr-2 carries the phosphothreonine modification. A helical membrane pass occupies residues 41 to 61; sequence CAYFALGGWFTGTTFVTSWYT. Residue His-118 participates in chlorophyll a binding. Residues 125–141 form a helical membrane-spanning segment; that stretch reads GFMLRQFELARSVQLRP. Residues Gln-130 and Asn-143 each contribute to the pheophytin a site. The chain crosses the membrane as a helical span at residues 153–166; it reads VFISVFFIYPLGQS. His-198 provides a ligand contact to chlorophyll a. The helical transmembrane segment at 208–228 threads the bilayer; it reads AALLCAIHGATVENTLFEDGD. His-215 and Phe-262 together coordinate a plastoquinone. A Fe cation-binding site is contributed by His-215. His-269 contacts Fe cation. The chain crosses the membrane as a helical span at residues 279–295; sequence GLWMSALGVVGLALNLR.

This sequence belongs to the reaction center PufL/M/PsbA/D family. As to quaternary structure, PSII is composed of 1 copy each of membrane proteins PsbA, PsbB, PsbC, PsbD, PsbE, PsbF, PsbH, PsbI, PsbJ, PsbK, PsbL, PsbM, PsbT, PsbX, PsbY, PsbZ, Psb30/Ycf12, at least 3 peripheral proteins of the oxygen-evolving complex and a large number of cofactors. It forms dimeric complexes. The D1/D2 heterodimer binds P680, chlorophylls that are the primary electron donor of PSII, and subsequent electron acceptors. It shares a non-heme iron and each subunit binds pheophytin, quinone, additional chlorophylls, carotenoids and lipids. There is also a Cl(-1) ion associated with D1 and D2, which is required for oxygen evolution. The PSII complex binds additional chlorophylls, carotenoids and specific lipids. is required as a cofactor.

It is found in the plastid membrane. It carries out the reaction 2 a plastoquinone + 4 hnu + 2 H2O = 2 a plastoquinol + O2. In terms of biological role, photosystem II (PSII) is a light-driven water:plastoquinone oxidoreductase that uses light energy to abstract electrons from H(2)O, generating O(2) and a proton gradient subsequently used for ATP formation. It consists of a core antenna complex that captures photons, and an electron transfer chain that converts photonic excitation into a charge separation. The D1/D2 (PsbA/PsbD) reaction center heterodimer binds P680, the primary electron donor of PSII as well as several subsequent electron acceptors. D2 is needed for assembly of a stable PSII complex. The sequence is that of Photosystem II D2 protein from Cuscuta reflexa (Southern Asian dodder).